Consider the following 287-residue polypeptide: Hydroxysteroid 11-beta-dehydrogenase 1-like protein (287 aa).

Residues 1–15 (MKVLLLTGLGALFFA) form the signal peptide. Residues 36 to 62 (GASA…TAHT), 87 to 88 (DM), and 114 to 116 (NHI) contribute to the NADP(+) site. Ser165 provides a ligand contact to substrate. Tyr178 serves as the catalytic Proton acceptor. Residues 178–182 (YSAAK) and 211–217 (GLRDRAS) each bind NADP(+).

Belongs to the short-chain dehydrogenases/reductases (SDR) family.

The protein resides in the secreted. The catalysed reaction is cortisone + NADPH + H(+) = cortisol + NADP(+). In terms of biological role, unidirectional NADP(+)-dependent cortisol dehydrogenase (in vitro). In Macaca fascicularis (Crab-eating macaque), this protein is Hydroxysteroid 11-beta-dehydrogenase 1-like protein (HSD11B1L).